The following is a 485-amino-acid chain: Ribulose bisphosphate carboxylase large chain (485 aa).

Residues Asn124 and Thr174 each coordinate substrate. Residue Lys176 is the Proton acceptor of the active site. Lys178 is a substrate binding site. Residues Lys202, Asp204, and Glu205 each contribute to the Mg(2+) site. Lys202 bears the N6-carboxylysine mark. His294 functions as the Proton acceptor in the catalytic mechanism. Residues Arg295, His327, and Ser379 each contribute to the substrate site.

The protein belongs to the RuBisCO large chain family. Type I subfamily. Heterohexadecamer of 8 large chains and 8 small chains. Requires Mg(2+) as cofactor.

It carries out the reaction 2 (2R)-3-phosphoglycerate + 2 H(+) = D-ribulose 1,5-bisphosphate + CO2 + H2O. The catalysed reaction is D-ribulose 1,5-bisphosphate + O2 = 2-phosphoglycolate + (2R)-3-phosphoglycerate + 2 H(+). In terms of biological role, ruBisCO catalyzes two reactions: the carboxylation of D-ribulose 1,5-bisphosphate, the primary event in carbon dioxide fixation, as well as the oxidative fragmentation of the pentose substrate. Both reactions occur simultaneously and in competition at the same active site. This is Ribulose bisphosphate carboxylase large chain from Rhodopseudomonas palustris (strain HaA2).